A 266-amino-acid polypeptide reads, in one-letter code: Glucosamine-6-phosphate deaminase (266 aa).

Asp-72 (proton acceptor; for enolization step) is an active-site residue. Catalysis depends on Asp-141, which acts as the For ring-opening step. His-143 functions as the Proton acceptor; for ring-opening step in the catalytic mechanism. The For ring-opening step role is filled by Glu-148.

The protein belongs to the glucosamine/galactosamine-6-phosphate isomerase family. NagB subfamily. In terms of assembly, homohexamer.

The enzyme catalyses alpha-D-glucosamine 6-phosphate + H2O = beta-D-fructose 6-phosphate + NH4(+). It participates in amino-sugar metabolism; N-acetylneuraminate degradation; D-fructose 6-phosphate from N-acetylneuraminate: step 5/5. With respect to regulation, allosterically activated by N-acetylglucosamine 6-phosphate (GlcNAc6P). Its function is as follows. Catalyzes the reversible isomerization-deamination of glucosamine 6-phosphate (GlcN6P) to form fructose 6-phosphate (Fru6P) and ammonium ion. This Enterobacter sp. (strain 638) protein is Glucosamine-6-phosphate deaminase.